The sequence spans 60 residues: Single-pass membrane and coiled-coil domain-containing protein 4 homolog (60 aa).

Positions 1-23 are disordered; the sequence is MRKLRGGQTKETRKQRQERKEEN. A compositionally biased stretch (basic and acidic residues) spans 8-23; sequence QTKETRKQRQERKEEN. Residues 8-33 are a coiled coil; sequence QTKETRKQRQERKEENLKIQQQMKTI. The chain crosses the membrane as a helical span at residues 31–51; sequence KTIVLPTIGVIFLCIVVYVFL.

It belongs to the SMCO4 family.

The protein localises to the membrane. The chain is Single-pass membrane and coiled-coil domain-containing protein 4 homolog from Anopheles gambiae (African malaria mosquito).